A 366-amino-acid chain; its full sequence is Protein RecA (366 aa).

Residue 81–88 (GPESSGKT) coordinates ATP.

The protein belongs to the RecA family.

Its subcellular location is the cytoplasm. In terms of biological role, can catalyze the hydrolysis of ATP in the presence of single-stranded DNA, the ATP-dependent uptake of single-stranded DNA by duplex DNA, and the ATP-dependent hybridization of homologous single-stranded DNAs. It interacts with LexA causing its activation and leading to its autocatalytic cleavage. This Leptospira interrogans serogroup Icterohaemorrhagiae serovar copenhageni (strain Fiocruz L1-130) protein is Protein RecA.